The chain runs to 800 residues: Phenylalanine--tRNA ligase beta subunit (800 aa).

A tRNA-binding domain is found at threonine 39–leucine 154. A B5 domain is found at alanine 408–serine 483. 4 residues coordinate Mg(2+): aspartate 461, aspartate 467, glutamate 470, and glutamate 471. An FDX-ACB domain is found at proline 708 to arginine 800.

This sequence belongs to the phenylalanyl-tRNA synthetase beta subunit family. Type 1 subfamily. As to quaternary structure, tetramer of two alpha and two beta subunits. Mg(2+) is required as a cofactor.

It is found in the cytoplasm. It carries out the reaction tRNA(Phe) + L-phenylalanine + ATP = L-phenylalanyl-tRNA(Phe) + AMP + diphosphate + H(+). The polypeptide is Phenylalanine--tRNA ligase beta subunit (Staphylococcus aureus (strain COL)).